A 214-amino-acid polypeptide reads, in one-letter code: Oocyte zinc finger protein XlCOF10 (214 aa).

C2H2-type zinc fingers lie at residues 1–23, 29–51, 57–79, 85–107, 113–135, 141–163, and 169–191; these read FSCS…RQLH, FTCS…HRIH, FTCD…QKSH, FCCS…QRTH, FTCT…QKSH, FSCS…QRIH, and FSCS…EKCH.

Belongs to the krueppel C2H2-type zinc-finger protein family.

The protein resides in the nucleus. Functionally, may be involved in transcriptional regulation. In Xenopus laevis (African clawed frog), this protein is Oocyte zinc finger protein XlCOF10.